The following is a 313-amino-acid chain: 2-phosphoglycerate kinase (313 aa).

The 88-residue stretch at 8-95 folds into the ATP-cone domain; sequence SRILVTDKEY…LWRRVLKKHS (88 aa).

The protein belongs to the 2-phosphoglycerate kinase family. A divalent metal cation serves as cofactor.

It carries out the reaction (2R)-2-phosphoglycerate + ATP = (2R)-2,3-bisphosphoglycerate + ADP + H(+). It participates in thermoadapter biosynthesis; cyclic 2,3-diphosphoglycerate biosynthesis; cyclic 2,3-diphosphoglycerate from 2-phospho-D-glycerate: step 1/2. Catalyzes the phosphorylation of 2-phosphoglycerate to 2,3-diphosphoglycerate. Involved in the biosynthesis of cyclic 2,3-bisphosphoglycerate, a thermoprotectant. This chain is 2-phosphoglycerate kinase, found in Methanococcus maripaludis (strain C6 / ATCC BAA-1332).